The following is a 386-amino-acid chain: Patatin-14 (386 aa).

A signal peptide spans 1-23 (MATTKSFLILFFMILATTSSTCA). The PNPLA domain occupies 32–229 (LSIDGGGIKG…TVGDPALLSL (198 aa)). The short motif at 36 to 41 (GGGIKG) is the GXGXXG element. Residues 75–79 (GTSTG) carry the GXSXG motif. Ser-77 (nucleophile) is an active-site residue. N-linked (GlcNAc...) asparagine glycosylation occurs at Asn-115. Residue Asp-215 is the Proton acceptor of the active site. The short motif at 215–217 (DGG) is the DGA/G element. A coiled-coil region spans residues 321–381 (ENALTGTTTE…LLSDRKKLRA (61 aa)).

Belongs to the patatin family. Tuber.

The protein localises to the vacuole. In terms of biological role, probable lipolytic acyl hydrolase (LAH), an activity which is thought to be involved in the response of tubers to pathogens. This chain is Patatin-14, found in Solanum tuberosum (Potato).